Consider the following 87-residue polypeptide: Phosphocarrier protein HPr (87 aa).

The HPr domain maps to methionine 1–glutamate 87. Histidine 15 acts as the Pros-phosphohistidine intermediate in catalysis. Serine 46 is modified (phosphoserine; by HPrK/P).

The protein belongs to the HPr family.

It localises to the cytoplasm. With respect to regulation, phosphorylation on Ser-46 inhibits the phosphoryl transfer from enzyme I to HPr. Its function is as follows. General (non sugar-specific) component of the phosphoenolpyruvate-dependent sugar phosphotransferase system (sugar PTS). This major carbohydrate active-transport system catalyzes the phosphorylation of incoming sugar substrates concomitantly with their translocation across the cell membrane. The phosphoryl group from phosphoenolpyruvate (PEP) is transferred to the phosphoryl carrier protein HPr by enzyme I. Phospho-HPr then transfers it to the PTS EIIA domain. Functionally, P-Ser-HPr interacts with the catabolite control protein A (CcpA), forming a complex that binds to DNA at the catabolite response elements cre, operator sites preceding a large number of catabolite-regulated genes. Thus, P-Ser-HPr is a corepressor in carbon catabolite repression (CCR), a mechanism that allows bacteria to coordinate and optimize the utilization of available carbon sources. P-Ser-HPr also plays a role in inducer exclusion, in which it probably interacts with several non-PTS permeases and inhibits their transport activity. The sequence is that of Phosphocarrier protein HPr (ptsH) from Halalkalibacterium halodurans (strain ATCC BAA-125 / DSM 18197 / FERM 7344 / JCM 9153 / C-125) (Bacillus halodurans).